Here is a 251-residue protein sequence, read N- to C-terminus: Adenosylcobinamide-GDP ribazoletransferase (251 aa).

A run of 5 helical transmembrane segments spans residues 44–64, 114–134, 143–163, 177–197, and 198–218; these read LVGL…LLAG, IGAF…VLAH, GALV…AACV, AGAT…TGVA, and LAGP…VVWL.

This sequence belongs to the CobS family. The cofactor is Mg(2+).

It is found in the cell inner membrane. It carries out the reaction alpha-ribazole + adenosylcob(III)inamide-GDP = adenosylcob(III)alamin + GMP + H(+). It catalyses the reaction alpha-ribazole 5'-phosphate + adenosylcob(III)inamide-GDP = adenosylcob(III)alamin 5'-phosphate + GMP + H(+). Its pathway is cofactor biosynthesis; adenosylcobalamin biosynthesis; adenosylcobalamin from cob(II)yrinate a,c-diamide: step 7/7. Functionally, joins adenosylcobinamide-GDP and alpha-ribazole to generate adenosylcobalamin (Ado-cobalamin). Also synthesizes adenosylcobalamin 5'-phosphate from adenosylcobinamide-GDP and alpha-ribazole 5'-phosphate. The sequence is that of Adenosylcobinamide-GDP ribazoletransferase from Nitratidesulfovibrio vulgaris (strain DSM 19637 / Miyazaki F) (Desulfovibrio vulgaris).